The sequence spans 458 residues: Opine oxidase subunit A (458 aa).

This sequence to T-protein and to dimethylglycine dehydrogenase. In terms of assembly, heterodimer of a subunit A and a subunit B.

Its pathway is opine metabolism; octopine degradation. Oxidative cleavage of octopine into L-arginine and pyruvate. This chain is Opine oxidase subunit A (ooxA), found in Rhizobium meliloti (strain 1021) (Ensifer meliloti).